Here is a 171-residue protein sequence, read N- to C-terminus: 3-hydroxydecanoyl-[acyl-carrier-protein] dehydratase (171 aa).

H70 is a catalytic residue.

This sequence belongs to the thioester dehydratase family. FabA subfamily. As to quaternary structure, homodimer.

The protein localises to the cytoplasm. It carries out the reaction a (3R)-hydroxyacyl-[ACP] = a (2E)-enoyl-[ACP] + H2O. The catalysed reaction is (3R)-hydroxydecanoyl-[ACP] = (2E)-decenoyl-[ACP] + H2O. It catalyses the reaction (2E)-decenoyl-[ACP] = (3Z)-decenoyl-[ACP]. Its pathway is lipid metabolism; fatty acid biosynthesis. Functionally, necessary for the introduction of cis unsaturation into fatty acids. Catalyzes the dehydration of (3R)-3-hydroxydecanoyl-ACP to E-(2)-decenoyl-ACP and then its isomerization to Z-(3)-decenoyl-ACP. Can catalyze the dehydratase reaction for beta-hydroxyacyl-ACPs with saturated chain lengths up to 16:0, being most active on intermediate chain length. This chain is 3-hydroxydecanoyl-[acyl-carrier-protein] dehydratase, found in Azotobacter vinelandii (strain DJ / ATCC BAA-1303).